The sequence spans 2298 residues: Protein Ycf2 (2298 aa).

1637–1644 (GSIGTGRS) contributes to the ATP binding site.

Belongs to the Ycf2 family.

The protein localises to the plastid. Its subcellular location is the chloroplast stroma. Probable ATPase of unknown function. Its presence in a non-photosynthetic plant (Epifagus virginiana) and experiments in tobacco indicate that it has an essential function which is probably not related to photosynthesis. The chain is Protein Ycf2 from Lotus japonicus (Lotus corniculatus var. japonicus).